A 309-amino-acid chain; its full sequence is HPr kinase/phosphorylase (309 aa).

Catalysis depends on residues His-138 and Lys-159. Position 153 to 160 (153 to 160 (GDSGIGKS)) interacts with ATP. Ser-160 contacts Mg(2+). Asp-177 acts as the Proton acceptor; for phosphorylation activity. Proton donor; for dephosphorylation activity in catalysis. The important for the catalytic mechanism of both phosphorylation and dephosphorylation stretch occupies residues 201 to 210 (LEIRGVGIID). A Mg(2+)-binding site is contributed by Glu-202. Arg-243 is an active-site residue. The interval 264-269 (PVKTGR) is important for the catalytic mechanism of dephosphorylation.

This sequence belongs to the HPrK/P family. Homohexamer. Mg(2+) is required as a cofactor.

The catalysed reaction is [HPr protein]-L-serine + ATP = [HPr protein]-O-phospho-L-serine + ADP + H(+). It carries out the reaction [HPr protein]-O-phospho-L-serine + phosphate + H(+) = [HPr protein]-L-serine + diphosphate. Catalyzes the ATP- as well as the pyrophosphate-dependent phosphorylation of a specific serine residue in HPr, a phosphocarrier protein of the phosphoenolpyruvate-dependent sugar phosphotransferase system (PTS). HprK/P also catalyzes the pyrophosphate-producing, inorganic phosphate-dependent dephosphorylation (phosphorolysis) of seryl-phosphorylated HPr (P-Ser-HPr). The two antagonistic activities of HprK/P are regulated by several intracellular metabolites, which change their concentration in response to the absence or presence of rapidly metabolisable carbon sources (glucose, fructose, etc.) in the growth medium. Therefore, by controlling the phosphorylation state of HPr, HPrK/P is a sensor enzyme that plays a major role in the regulation of carbon metabolism and sugar transport: it mediates carbon catabolite repression (CCR), and regulates PTS-catalyzed carbohydrate uptake and inducer exclusion. This Streptococcus thermophilus (strain ATCC BAA-250 / LMG 18311) protein is HPr kinase/phosphorylase.